The primary structure comprises 230 residues: Large ribosomal subunit protein uL1 (230 aa).

It belongs to the universal ribosomal protein uL1 family. As to quaternary structure, part of the 50S ribosomal subunit.

In terms of biological role, binds directly to 23S rRNA. The L1 stalk is quite mobile in the ribosome, and is involved in E site tRNA release. Functionally, protein L1 is also a translational repressor protein, it controls the translation of the L11 operon by binding to its mRNA. In Bifidobacterium longum (strain DJO10A), this protein is Large ribosomal subunit protein uL1.